A 253-amino-acid polypeptide reads, in one-letter code: uncharacterized protein (253 aa).

Residues 175–184 (NPTQTSPGKP) are compositionally biased toward polar residues. The interval 175–253 (NPTQTSPGKP…ATENEDRLPS (79 aa)) is disordered. Ser180 is modified (phosphoserine). 2 stretches are compositionally biased toward low complexity: residues 185–196 (STSESSQTDTST) and 203–214 (TPTTTRASSYTT). A compositionally biased stretch (polar residues) spans 215-242 (LVSTSNQVSNEAEASAVETSANQAQNTE).

Belongs to the TRAPP small subunits family. BET3 subfamily.

This is an uncharacterized protein from Schizosaccharomyces pombe (strain 972 / ATCC 24843) (Fission yeast).